The primary structure comprises 397 residues: Homoserine O-acetyltransferase (397 aa).

Residues 58-368 (NAVLVLHALT…EAKWGHDAFL (311 aa)) enclose the AB hydrolase-1 domain. The active-site Nucleophile is Ser-164. Arg-233 contributes to the substrate binding site. Active-site residues include Asp-331 and His-364. Asp-365 is a binding site for substrate.

This sequence belongs to the AB hydrolase superfamily. MetX family. In terms of assembly, homodimer.

Its subcellular location is the cytoplasm. It carries out the reaction L-homoserine + acetyl-CoA = O-acetyl-L-homoserine + CoA. It functions in the pathway amino-acid biosynthesis; L-methionine biosynthesis via de novo pathway; O-acetyl-L-homoserine from L-homoserine: step 1/1. Its function is as follows. Transfers an acetyl group from acetyl-CoA to L-homoserine, forming acetyl-L-homoserine. This chain is Homoserine O-acetyltransferase, found in Solidesulfovibrio magneticus (strain ATCC 700980 / DSM 13731 / RS-1) (Desulfovibrio magneticus).